The sequence spans 1368 residues: DNA-directed RNA polymerase subunit beta (1368 aa).

It belongs to the RNA polymerase beta chain family. The RNAP catalytic core consists of 2 alpha, 1 beta, 1 beta' and 1 omega subunit. When a sigma factor is associated with the core the holoenzyme is formed, which can initiate transcription.

The catalysed reaction is RNA(n) + a ribonucleoside 5'-triphosphate = RNA(n+1) + diphosphate. Functionally, DNA-dependent RNA polymerase catalyzes the transcription of DNA into RNA using the four ribonucleoside triphosphates as substrates. The protein is DNA-directed RNA polymerase subunit beta of Janthinobacterium sp. (strain Marseille) (Minibacterium massiliensis).